Consider the following 284-residue polypeptide: MAGCAARVPPGSEARLSLATFLLGASVLALPLLTRAGLQGRTGLALYVAGLNALLLLLYRPPRYQIAIRACFLGFVFGCGVLLSFSQSSWNHFGWYVCSLSLFHYSEYLVTAVNNPKSLSLDSFLLNHSLEYTVAALSSWIEFTLENIFWPELKQITWLSAAGLLMVIFGECLRKVAMFTAGSNFNHVVQSEKSDTHTLVTSGVYAWCRHPSYVGWFYWSIGTQVMLCNPICGVVYALTVWRFFRDRTEEEEISLIHFFGEEYLDYKKRVPTGLPFIKGVKVGL.

Over 1-16 the chain is Cytoplasmic; it reads MAGCAARVPPGSEARL. A helical membrane pass occupies residues 17–33; that stretch reads SLATFLLGASVLALPLL. The Lumenal segment spans residues 34-41; that stretch reads TRAGLQGR. Residues 42-59 form a helical membrane-spanning segment; that stretch reads TGLALYVAGLNALLLLLY. Over 60 to 69 the chain is Cytoplasmic; the sequence is RPPRYQIAIR. The helical transmembrane segment at 70 to 87 threads the bilayer; it reads ACFLGFVFGCGVLLSFSQ. The Lumenal portion of the chain corresponds to 88-92; that stretch reads SSWNH. A helical membrane pass occupies residues 93–112; the sequence is FGWYVCSLSLFHYSEYLVTA. At 113–131 the chain is on the cytoplasmic side; it reads VNNPKSLSLDSFLLNHSLE. A helical membrane pass occupies residues 132-149; the sequence is YTVAALSSWIEFTLENIF. The Lumenal portion of the chain corresponds to 150–154; the sequence is WPELK. The chain crosses the membrane as a helical span at residues 155–174; it reads QITWLSAAGLLMVIFGECLR. Residues 175-212 are Cytoplasmic-facing; sequence KVAMFTAGSNFNHVVQSEKSDTHTLVTSGVYAWCRHPS. S-adenosyl-L-methionine contacts are provided by residues Q190, 197–200, Y205, and 210–213; these read HTLV and HPSY. Residues 213-228 form a helical membrane-spanning segment; that stretch reads YVGWFYWSIGTQVMLC. N229 is a topological domain (lumenal). The helical transmembrane segment at 230–244 threads the bilayer; that stretch reads PICGVVYALTVWRFF. At 245-284 the chain is on the cytoplasmic side; sequence RDRTEEEEISLIHFFGEEYLDYKKRVPTGLPFIKGVKVGL. Substrate is bound at residue R247. An S-adenosyl-L-methionine-binding site is contributed by E251.

It belongs to the class VI-like SAM-binding methyltransferase superfamily. Isoprenylcysteine carboxyl methyltransferase family.

The protein localises to the endoplasmic reticulum membrane. The catalysed reaction is [protein]-C-terminal S-[(2E,6E)-farnesyl]-L-cysteine + S-adenosyl-L-methionine = [protein]-C-terminal S-[(2E,6E)-farnesyl]-L-cysteine methyl ester + S-adenosyl-L-homocysteine. Functionally, catalyzes the post-translational methylation of isoprenylated C-terminal cysteine residues. In Rattus norvegicus (Rat), this protein is Protein-S-isoprenylcysteine O-methyltransferase.